The primary structure comprises 189 residues: Probable nicotinate-nucleotide adenylyltransferase (189 aa).

This sequence belongs to the NadD family.

The catalysed reaction is nicotinate beta-D-ribonucleotide + ATP + H(+) = deamido-NAD(+) + diphosphate. It participates in cofactor biosynthesis; NAD(+) biosynthesis; deamido-NAD(+) from nicotinate D-ribonucleotide: step 1/1. In terms of biological role, catalyzes the reversible adenylation of nicotinate mononucleotide (NaMN) to nicotinic acid adenine dinucleotide (NaAD). This is Probable nicotinate-nucleotide adenylyltransferase from Bacillus cereus (strain AH820).